A 271-amino-acid polypeptide reads, in one-letter code: Phosphatidylinositol transfer protein beta isoform (271 aa).

An N6-acetyllysine modification is found at Lys-215. Phosphoserine is present on Ser-262.

Belongs to the PtdIns transfer protein family. PI transfer class I subfamily. In terms of processing, constitutive phosphorylation of Ser-262 has no effect on phospholipid transfer activity but is required for Golgi targeting.

The protein resides in the golgi apparatus. The protein localises to the golgi apparatus membrane. It localises to the endoplasmic reticulum membrane. The enzyme catalyses a 1,2-diacyl-sn-glycero-3-phosphocholine(in) = a 1,2-diacyl-sn-glycero-3-phosphocholine(out). It carries out the reaction a 1,2-diacyl-sn-glycero-3-phospho-(1D-myo-inositol)(in) = a 1,2-diacyl-sn-glycero-3-phospho-(1D-myo-inositol)(out). The catalysed reaction is an N-(acyl)-sphingosylphosphocholine(in) = an N-(acyl)-sphingosylphosphocholine(out). Its function is as follows. Catalyzes the transfer of phosphatidylinositol, phosphatidylcholine and sphingomyelin between membranes. Required for COPI-mediated retrograde transport from the Golgi to the endoplasmic reticulum; phosphatidylinositol and phosphatidylcholine transfer activity is essential for this function. The sequence is that of Phosphatidylinositol transfer protein beta isoform (PITPNB) from Bos taurus (Bovine).